A 238-amino-acid chain; its full sequence is tRNA (guanine-N(7)-)-methyltransferase (238 aa).

S-adenosyl-L-methionine-binding residues include E68, E93, D120, and D143. The active site involves D143. Residues K147, D179, and 216 to 219 contribute to the substrate site; that span reads TKFE.

This sequence belongs to the class I-like SAM-binding methyltransferase superfamily. TrmB family.

The enzyme catalyses guanosine(46) in tRNA + S-adenosyl-L-methionine = N(7)-methylguanosine(46) in tRNA + S-adenosyl-L-homocysteine. The protein operates within tRNA modification; N(7)-methylguanine-tRNA biosynthesis. Its function is as follows. Catalyzes the formation of N(7)-methylguanine at position 46 (m7G46) in tRNA. The sequence is that of tRNA (guanine-N(7)-)-methyltransferase from Shewanella woodyi (strain ATCC 51908 / MS32).